Here is a 397-residue protein sequence, read N- to C-terminus: Tryptophan synthase beta chain (397 aa).

N6-(pyridoxal phosphate)lysine is present on lysine 87.

It belongs to the TrpB family. Tetramer of two alpha and two beta chains. Pyridoxal 5'-phosphate is required as a cofactor.

It catalyses the reaction (1S,2R)-1-C-(indol-3-yl)glycerol 3-phosphate + L-serine = D-glyceraldehyde 3-phosphate + L-tryptophan + H2O. The protein operates within amino-acid biosynthesis; L-tryptophan biosynthesis; L-tryptophan from chorismate: step 5/5. Functionally, the beta subunit is responsible for the synthesis of L-tryptophan from indole and L-serine. The chain is Tryptophan synthase beta chain from Escherichia coli O45:K1 (strain S88 / ExPEC).